Reading from the N-terminus, the 896-residue chain is Cytokine receptor common subunit beta (896 aa).

The signal sequence occupies residues M1 to G22. At H23–W441 the chain is on the extracellular side. C39 and C49 are oxidised to a cystine. Residue N62 is glycosylated (N-linked (GlcNAc...) asparagine). 2 cysteine pairs are disulfide-bonded: C77–C99 and C88–C94. The Fibronectin type-III 1 domain maps to P136–G243. N141 carries N-linked (GlcNAc...) asparagine glycosylation. Over residues S220 to S233 the composition is skewed to low complexity. The interval S220–G243 is disordered. Intrachain disulfides connect C253–C263 and C292–C310. The Fibronectin type-III 2 domain maps to Q343–T439. Residue N350 is glycosylated (N-linked (GlcNAc...) asparagine). A WSXWS motif motif is present at residues W428 to S432. A helical transmembrane segment spans residues V442–L463. Over R464–C896 the chain is Cytoplasmic. Residues W477–S485 carry the Box 1 motif motif. Disordered regions lie at residues E543–L620 and C658–L725. 2 stretches are compositionally biased toward polar residues: residues P555–N571 and C658–P668. Positions P716–L725 are enriched in low complexity. A phosphoserine mark is found at S752 and S754. Residue Y765 is modified to Phosphotyrosine. Residues S771–E810 are disordered.

Belongs to the type I cytokine receptor family. Type 4 subfamily. Heterodimer of an alpha and a beta subunit. The beta subunit is common to the IL3, IL5 and GM-CSF receptors. The signaling GM-CSF receptor complex is a dodecamer of two head-to-head hexamers of two alpha, two beta, and two ligand subunits. Interacts with TMEM102; this interaction occurs preferentially in the absence of CSF2. Interacts with FCER1G; this interaction is direct. Interacts with LYN. In terms of processing, may be phosphorylated by LYN.

It localises to the membrane. High affinity receptor for interleukin-3, interleukin-5 and granulocyte-macrophage colony-stimulating factor. The chain is Cytokine receptor common subunit beta (Csf2rb) from Mus musculus (Mouse).